A 163-amino-acid polypeptide reads, in one-letter code: 3-hydroxyacyl-[acyl-carrier-protein] dehydratase FabZ (163 aa).

His58 is a catalytic residue.

The protein belongs to the thioester dehydratase family. FabZ subfamily.

Its subcellular location is the cytoplasm. It carries out the reaction a (3R)-hydroxyacyl-[ACP] = a (2E)-enoyl-[ACP] + H2O. In terms of biological role, involved in unsaturated fatty acids biosynthesis. Catalyzes the dehydration of short chain beta-hydroxyacyl-ACPs and long chain saturated and unsaturated beta-hydroxyacyl-ACPs. This is 3-hydroxyacyl-[acyl-carrier-protein] dehydratase FabZ from Francisella philomiragia subsp. philomiragia (strain ATCC 25017 / CCUG 19701 / FSC 153 / O#319-036).